The primary structure comprises 464 residues: Bifunctional protein GlmU (464 aa).

A pyrophosphorylase region spans residues 1–232 (MKHDELAAVI…ADEAMGINDR (232 aa)). Residues 11-14 (LAAG), Lys25, Gln76, and 81-82 (GT) contribute to the UDP-N-acetyl-alpha-D-glucosamine site. Asp106 contacts Mg(2+). Positions 143, 157, 172, and 230 each coordinate UDP-N-acetyl-alpha-D-glucosamine. Mg(2+) is bound at residue Asn230. The segment at 233 to 253 (VQLAQASALMRRRINENLMRA) is linker. Positions 254–464 (GVSFIDPEQT…RHDPKCKNKD (211 aa)) are N-acetyltransferase. Positions 336 and 354 each coordinate UDP-N-acetyl-alpha-D-glucosamine. His366 acts as the Proton acceptor in catalysis. UDP-N-acetyl-alpha-D-glucosamine-binding residues include Tyr369 and Asn380. Acetyl-CoA-binding positions include 389–390 (NY), Ser408, Ala426, and Arg443.

It in the N-terminal section; belongs to the N-acetylglucosamine-1-phosphate uridyltransferase family. The protein in the C-terminal section; belongs to the transferase hexapeptide repeat family. Homotrimer. Mg(2+) is required as a cofactor.

Its subcellular location is the cytoplasm. The enzyme catalyses alpha-D-glucosamine 1-phosphate + acetyl-CoA = N-acetyl-alpha-D-glucosamine 1-phosphate + CoA + H(+). The catalysed reaction is N-acetyl-alpha-D-glucosamine 1-phosphate + UTP + H(+) = UDP-N-acetyl-alpha-D-glucosamine + diphosphate. Its pathway is nucleotide-sugar biosynthesis; UDP-N-acetyl-alpha-D-glucosamine biosynthesis; N-acetyl-alpha-D-glucosamine 1-phosphate from alpha-D-glucosamine 6-phosphate (route II): step 2/2. It participates in nucleotide-sugar biosynthesis; UDP-N-acetyl-alpha-D-glucosamine biosynthesis; UDP-N-acetyl-alpha-D-glucosamine from N-acetyl-alpha-D-glucosamine 1-phosphate: step 1/1. The protein operates within bacterial outer membrane biogenesis; LPS lipid A biosynthesis. Catalyzes the last two sequential reactions in the de novo biosynthetic pathway for UDP-N-acetylglucosamine (UDP-GlcNAc). The C-terminal domain catalyzes the transfer of acetyl group from acetyl coenzyme A to glucosamine-1-phosphate (GlcN-1-P) to produce N-acetylglucosamine-1-phosphate (GlcNAc-1-P), which is converted into UDP-GlcNAc by the transfer of uridine 5-monophosphate (from uridine 5-triphosphate), a reaction catalyzed by the N-terminal domain. The chain is Bifunctional protein GlmU from Syntrophotalea carbinolica (strain DSM 2380 / NBRC 103641 / GraBd1) (Pelobacter carbinolicus).